Consider the following 321-residue polypeptide: Malate dehydrogenase (321 aa).

NAD(+)-binding positions include 10 to 15 (GSGMIG) and D34. R83 and R89 together coordinate substrate. Residues N96 and 119–121 (ITN) contribute to the NAD(+) site. Residues N121 and R152 each contribute to the substrate site. H176 serves as the catalytic Proton acceptor.

This sequence belongs to the LDH/MDH superfamily. MDH type 3 family.

It catalyses the reaction (S)-malate + NAD(+) = oxaloacetate + NADH + H(+). Catalyzes the reversible oxidation of malate to oxaloacetate. This chain is Malate dehydrogenase, found in Chelativorans sp. (strain BNC1).